Here is a 349-residue protein sequence, read N- to C-terminus: Alanine racemase (349 aa).

The active-site Proton acceptor; specific for D-alanine is K35. K35 carries the N6-(pyridoxal phosphate)lysine modification. R130 serves as a coordination point for substrate. The active-site Proton acceptor; specific for L-alanine is the Y244. Position 292 (M292) interacts with substrate.

The protein belongs to the alanine racemase family. Pyridoxal 5'-phosphate serves as cofactor.

The catalysed reaction is L-alanine = D-alanine. It functions in the pathway amino-acid biosynthesis; D-alanine biosynthesis; D-alanine from L-alanine: step 1/1. In terms of biological role, catalyzes the interconversion of L-alanine and D-alanine. May also act on other amino acids. The protein is Alanine racemase (alr) of Cereibacter sphaeroides (strain ATCC 17023 / DSM 158 / JCM 6121 / CCUG 31486 / LMG 2827 / NBRC 12203 / NCIMB 8253 / ATH 2.4.1.) (Rhodobacter sphaeroides).